Reading from the N-terminus, the 144-residue chain is 3-dehydroquinate dehydratase (144 aa).

Tyr-24 serves as the catalytic Proton acceptor. Positions 76, 82, and 89 each coordinate substrate. Catalysis depends on His-102, which acts as the Proton donor. Substrate contacts are provided by residues 103–104 and Arg-113; that span reads LS.

Belongs to the type-II 3-dehydroquinase family. As to quaternary structure, homododecamer.

It catalyses the reaction 3-dehydroquinate = 3-dehydroshikimate + H2O. Its pathway is metabolic intermediate biosynthesis; chorismate biosynthesis; chorismate from D-erythrose 4-phosphate and phosphoenolpyruvate: step 3/7. Its function is as follows. Catalyzes a trans-dehydration via an enolate intermediate. This chain is 3-dehydroquinate dehydratase, found in Bordetella petrii (strain ATCC BAA-461 / DSM 12804 / CCUG 43448).